The chain runs to 120 residues: Seminal plasma protein HSP-1 (120 aa).

Repeat copies occupy residues 1–13 and 16–28. The segment at 1 to 28 is 2 X approximate repeats; it reads DLQTTGADHSATVNPDQQLIMTKHSATV. 4 O-linked (GalNAc...) threonine glycosylation sites follow: threonine 5, threonine 12, threonine 22, and threonine 27. 2 Fibronectin type-II domains span residues 29–73 and 74–120; these read TPEN…YCAA and TDYA…WKYC. 4 disulfides stabilise this stretch: cysteine 34-cysteine 58, cysteine 48-cysteine 71, cysteine 79-cysteine 105, and cysteine 93-cysteine 120.

The protein belongs to the seminal plasma protein family. As to quaternary structure, one glycoform exists as a monomer while the other forms a heterotetramer with HSP-2 and binds heparin. Post-translationally, O-glycosylated on Thr. There are two forms of HSP-1 which probably differ in the amount of sialylation of polysaccharide. Major component of seminal plasma.

The protein localises to the secreted. Its function is as follows. Could enhance the fertilizing capacity of spermatozoa upon interaction with heparin-like glycosaminoglycans present in the female genital tract. The protein is Seminal plasma protein HSP-1 of Equus caballus (Horse).